Consider the following 746-residue polypeptide: Eukaryotic translation initiation factor 3 subunit B (746 aa).

Basic and acidic residues predominate over residues 1–11 (MAPSYEHLREA). Residues 1-20 (MAPSYEHLREADLDEDEFDE) are disordered. In terms of domain architecture, RRM spans 42–128 (TFVVIDGLPE…HTLRVNKLMD (87 aa)). WD repeat units follow at residues 195–234 (DRPN…RLGR), 247–294 (PQEN…RSFA), 307–346 (PRKH…LLDK), 349–386 (IKVE…IGSN), 458–500 (TIKD…FFCP), 517–560 (LDKR…EKPE), and 575–620 (ADHY…LREE).

This sequence belongs to the eIF-3 subunit B family. In terms of assembly, component of the eukaryotic translation initiation factor 3 (eIF-3) complex.

The protein resides in the cytoplasm. In terms of biological role, RNA-binding component of the eukaryotic translation initiation factor 3 (eIF-3) complex, which is involved in protein synthesis of a specialized repertoire of mRNAs and, together with other initiation factors, stimulates binding of mRNA and methionyl-tRNAi to the 40S ribosome. The eIF-3 complex specifically targets and initiates translation of a subset of mRNAs involved in cell proliferation. The sequence is that of Eukaryotic translation initiation factor 3 subunit B from Pyricularia oryzae (strain 70-15 / ATCC MYA-4617 / FGSC 8958) (Rice blast fungus).